The chain runs to 228 residues: RNA chaperone ProQ (228 aa).

The disordered stretch occupies residues 105–178 (EAKARVQAQR…REEQHTPVSD (74 aa)). 2 stretches are compositionally biased toward basic and acidic residues: residues 117–136 (QQAK…DAPR) and 146–173 (RRKE…EEQH).

It belongs to the ProQ family.

It is found in the cytoplasm. Its function is as follows. RNA chaperone with significant RNA binding, RNA strand exchange and RNA duplexing activities. May regulate ProP activity through an RNA-based, post-transcriptional mechanism. The sequence is that of RNA chaperone ProQ from Citrobacter koseri (strain ATCC BAA-895 / CDC 4225-83 / SGSC4696).